The chain runs to 114 residues: ATP synthase subunit c (114 aa).

2 helical membrane-spanning segments follow: residues 31-51 (AVFYGALAIGAGVAIGAAAGG) and 88-108 (IETFVLYALLIAIIFIFTGIF).

Belongs to the ATPase C chain family. F-type ATPases have 2 components, F(1) - the catalytic core - and F(0) - the membrane proton channel. F(1) has five subunits: alpha(3), beta(3), gamma(1), delta(1), epsilon(1). F(0) has three main subunits: a(1), b(2) and c(10-14). The alpha and beta chains form an alternating ring which encloses part of the gamma chain. F(1) is attached to F(0) by a central stalk formed by the gamma and epsilon chains, while a peripheral stalk is formed by the delta and b chains.

It localises to the cell inner membrane. Functionally, f(1)F(0) ATP synthase produces ATP from ADP in the presence of a proton or sodium gradient. F-type ATPases consist of two structural domains, F(1) containing the extramembraneous catalytic core and F(0) containing the membrane proton channel, linked together by a central stalk and a peripheral stalk. During catalysis, ATP synthesis in the catalytic domain of F(1) is coupled via a rotary mechanism of the central stalk subunits to proton translocation. Key component of the F(0) channel; it plays a direct role in translocation across the membrane. A homomeric c-ring of between 10-14 subunits forms the central stalk rotor element with the F(1) delta and epsilon subunits. The chain is ATP synthase subunit c from Sulfurihydrogenibium sp. (strain YO3AOP1).